Here is a 1192-residue protein sequence, read N- to C-terminus: Plakophilin-4 (1192 aa).

The interval 1–31 (MPAPEQASLVEEGQPQTRQEAASTGPGMEPE) is disordered. The stretch at 36 to 70 (TILASVKEQELQFQRLTRELEVERQIVASQLERCR) forms a coiled coil. The segment at 73–262 (AESPSIASTS…PRPLNPSAYS (190 aa)) is disordered. At S75 the chain carries Phosphoserine. The segment covering 77–86 (SIASTSSTEK) has biased composition (polar residues). T84 carries the post-translational modification Phosphothreonine. Phosphoserine is present on residues S106, S132, S136, and S139. Composition is skewed to polar residues over residues 138-156 (GSLG…SDSG), 163-204 (FHNS…QPSV), and 214-230 (SVPS…STGV). A phosphoserine mark is found at S221, S231, and S236. The span at 231-242 (SPSRGSLRTSLG) shows a compositional bias: low complexity. R254 and R270 each carry omega-N-methylarginine. Phosphoserine is present on residues S273 and S281. Positions 290-310 (SVTSRQTSNPNGPTPQYQTTA) are disordered. Phosphoserine occurs at positions 314, 327, and 337. The interval 323-348 (TRVASPSQGQVGSSSPKRSGMTAVPQ) is disordered. Low complexity predominate over residues 325-338 (VASPSQGQVGSSSP). Residue Y372 is modified to Phosphotyrosine. Phosphoserine occurs at positions 392, 403, and 406. Position 412 is a phosphothreonine (T412). Y415 is subject to Phosphotyrosine. An ARM 1 repeat occupies 415 to 455 (YEGRTYYSPVYRSPNHGTVELQGSQTALYRTGSVGIGNLQR). Phosphoserine is present on residues S422, S427, and S438. Y478 carries the phosphotyrosine modification. S510, S512, and S515 each carry phosphoserine. 5 ARM repeats span residues 518 to 557 (KDPR…HLCF), 560 to 599 (NKVK…NLVF), 604 to 644 (DENK…NLSS), 660 to 702 (LTNT…NLSS), and 706 to 751 (EARK…NLSY). Over residues 773 to 782 (GKESPSKDSE) the composition is skewed to basic and acidic residues. A disordered region spans residues 773 to 810 (GKESPSKDSEPSCWGKKKKKKKRTPQEDQWDGVGPIPG). Phosphoserine is present on S776. 3 ARM repeats span residues 815–855 (PKGV…NLSA), 862–901 (AYIR…NMAL), and 950–993 (MENA…TLWQ). Phosphothreonine occurs at positions 1013 and 1017. S1045 carries the phosphoserine modification. Residues 1058–1086 (PRSEYDRTQPPMQYYNSQGDATHKGLYPG) are disordered. The span at 1067 to 1077 (PPMQYYNSQGD) shows a compositional bias: polar residues. Phosphoserine occurs at positions 1091, 1100, and 1135.

This sequence belongs to the beta-catenin family. As to quaternary structure, interacts with PDZD2. Interacts (via the C-terminus) with FRMPD2 (via the PDZ 2 domain). Interacts with RHOA; the interaction is detected at the midbody. Interacts with ECT2; the interaction is detected at the midbody. Interacts with CCDC85B. In terms of tissue distribution, expressed in salivary glands (at protein level). Expressed in arrector pili muscle (at protein level).

The protein localises to the cell junction. It localises to the desmosome. The protein resides in the cytoplasm. Its subcellular location is the cytoskeleton. It is found in the spindle. The protein localises to the midbody. It localises to the cell membrane. Plays a role as a regulator of Rho activity during cytokinesis. May play a role in junctional plaques. The polypeptide is Plakophilin-4 (PKP4) (Homo sapiens (Human)).